Reading from the N-terminus, the 590-residue chain is Aspartate--tRNA(Asp/Asn) ligase (590 aa).

Glutamate 173 is a binding site for L-aspartate. An aspartate region spans residues 197 to 200 (QIFK). An L-aspartate-binding site is contributed by arginine 219. Residues 219 to 221 (RDE) and glutamine 228 contribute to the ATP site. Histidine 450 contacts L-aspartate. ATP is bound at residue glutamate 484. Residue arginine 491 coordinates L-aspartate. 536 to 539 (GLDR) lines the ATP pocket.

The protein belongs to the class-II aminoacyl-tRNA synthetase family. Type 1 subfamily. Homodimer.

Its subcellular location is the cytoplasm. The catalysed reaction is tRNA(Asx) + L-aspartate + ATP = L-aspartyl-tRNA(Asx) + AMP + diphosphate. Its function is as follows. Aspartyl-tRNA synthetase with relaxed tRNA specificity since it is able to aspartylate not only its cognate tRNA(Asp) but also tRNA(Asn). Reaction proceeds in two steps: L-aspartate is first activated by ATP to form Asp-AMP and then transferred to the acceptor end of tRNA(Asp/Asn). In Coxiella burnetii (strain RSA 493 / Nine Mile phase I), this protein is Aspartate--tRNA(Asp/Asn) ligase.